The chain runs to 204 residues: Lysozyme g (204 aa).

Residues 1–19 form the signal peptide; the sequence is MHLMLVLLGLAALLGTSQS. Disulfide bonds link cysteine 23–cysteine 79 and cysteine 37–cysteine 48. Residues glutamate 92 and aspartate 105 contribute to the active site.

The protein belongs to the glycosyl hydrolase 23 family.

Its subcellular location is the secreted. The catalysed reaction is Hydrolysis of (1-&gt;4)-beta-linkages between N-acetylmuramic acid and N-acetyl-D-glucosamine residues in a peptidoglycan and between N-acetyl-D-glucosamine residues in chitodextrins.. Its function is as follows. Has bacteriolytic activity against M.luteus. This is Lysozyme g from Struthio camelus (Common ostrich).